Reading from the N-terminus, the 372-residue chain is NAD(P)H-quinone oxidoreductase subunit 1 (372 aa).

The next 9 membrane-spanning stretches (helical) occupy residues 27-47 (LLWL…GVLV), 65-85 (PEYI…KLIF), 97-117 (WLFT…YIIV), 128-148 (LAMG…GLLM), 176-196 (LALA…VEIV), 204-224 (ILSW…IAAL), 254-274 (FALF…LVSV), 308-328 (VLGI…AILL), and 347-367 (FLLP…LAFP).

Belongs to the complex I subunit 1 family. NDH-1 is composed of at least 11 different subunits.

It localises to the cellular thylakoid membrane. The enzyme catalyses a plastoquinone + NADH + (n+1) H(+)(in) = a plastoquinol + NAD(+) + n H(+)(out). It carries out the reaction a plastoquinone + NADPH + (n+1) H(+)(in) = a plastoquinol + NADP(+) + n H(+)(out). Its function is as follows. NDH-1 shuttles electrons from an unknown electron donor, via FMN and iron-sulfur (Fe-S) centers, to quinones in the respiratory and/or the photosynthetic chain. The immediate electron acceptor for the enzyme in this species is believed to be plastoquinone. Couples the redox reaction to proton translocation, and thus conserves the redox energy in a proton gradient. The polypeptide is NAD(P)H-quinone oxidoreductase subunit 1 (Thermosynechococcus vestitus (strain NIES-2133 / IAM M-273 / BP-1)).